Consider the following 173-residue polypeptide: T cell receptor gamma constant 1 (173 aa).

Positions 10-104 (PKPTIFLPSI…NKNGVDQEII (95 aa)) constitute an Ig-like domain. Cys32 and Cys88 form a disulfide bridge. N-linked (GlcNAc...) asparagine glycans are attached at residues Asn66, Asn120, Asn126, and Asn135. Residues 139-161 (YYMYLLLLLKSVVYFAIITCCLL) traverse the membrane as a helical segment.

As to quaternary structure, gamma-delta TR is a heterodimer composed of a gamma and delta chain; disulfide-linked. The gamma-delta TR is associated with the transmembrane signaling CD3 coreceptor proteins following the stoichiometry: a single gamma-delta TR heterodimer associates with one CD3D-CD3E heterodimer, one CD3G-CD3E heterodimer and one CD247 homodimer forming a stable octameric structure. Upon activation, gamma-delta TR complex associates with FCER1G to initiate intracellular signaling.

Its subcellular location is the cell membrane. Constant region of T cell receptor (TR) gamma chain that participates in the antigen recognition. Gamma-delta TRs recognize a variety of self and foreign non-peptide antigens frequently expressed at the epithelial boundaries between the host and external environment, including endogenous lipids presented by MH-like protein CD1D and phosphoantigens presented by butyrophilin-like molecule BTN3A1. Upon antigen recognition induces rapid, innate-like immune responses involved in pathogen clearance and tissue repair. Binding of gamma-delta TR complex to antigen triggers phosphorylation of immunoreceptor tyrosine-based activation motifs (ITAMs) in the CD3 chains by the LCK and FYN kinases, allowing the recruitment, phosphorylation, and activation of ZAP70 that facilitates phosphorylation of the scaffolding proteins LCP2 and LAT. This lead to the formation of a supramolecular signalosome that recruits the phospholipase PLCG1, resulting in calcium mobilization and ERK activation, ultimately leading to T cell expansion and differentiation into effector cells. Gamma-delta TRs are produced through somatic rearrangement of a limited repertoire of variable (V), diversity (D), and joining (J) genes. The potential diversity of gamma-delta TRs is conferred by the unique ability to rearrange (D) genes in tandem and to utilize all three reading frames. The combinatorial diversity is considerably increased by the sequence exonuclease trimming and random nucleotide (N) region additions which occur during the V-(D)-J rearrangements. The chain is T cell receptor gamma constant 1 from Homo sapiens (Human).